We begin with the raw amino-acid sequence, 343 residues long: Transcription factor BPE (343 aa).

One can recognise a bHLH domain in the interval 142-192 (QATDSHSLAERARREKISERMKILQDLVPGCNKVIGKALVLDEIINYIQSL).

In terms of assembly, homodimer. In terms of tissue distribution, specifically expressed in flowers, mostly in petals, inflorescence and flower buds. Expressed ubiquitously (leaves, flowers and stems).

The protein localises to the nucleus. In terms of biological role, involved in the control of petal size, by interfering with postmitotic cell expansion to limit final petal cell size. This Arabidopsis thaliana (Mouse-ear cress) protein is Transcription factor BPE (BPE).